The sequence spans 394 residues: NAD(P)H-quinone oxidoreductase subunit H (394 aa).

It belongs to the complex I 49 kDa subunit family. NDH-1 can be composed of about 15 different subunits; different subcomplexes with different compositions have been identified which probably have different functions.

The protein resides in the cellular thylakoid membrane. The catalysed reaction is a plastoquinone + NADH + (n+1) H(+)(in) = a plastoquinol + NAD(+) + n H(+)(out). The enzyme catalyses a plastoquinone + NADPH + (n+1) H(+)(in) = a plastoquinol + NADP(+) + n H(+)(out). Functionally, NDH-1 shuttles electrons from an unknown electron donor, via FMN and iron-sulfur (Fe-S) centers, to quinones in the respiratory and/or the photosynthetic chain. The immediate electron acceptor for the enzyme in this species is believed to be plastoquinone. Couples the redox reaction to proton translocation, and thus conserves the redox energy in a proton gradient. Cyanobacterial NDH-1 also plays a role in inorganic carbon-concentration. This Prochlorococcus marinus (strain MIT 9303) protein is NAD(P)H-quinone oxidoreductase subunit H.